The chain runs to 442 residues: Syndecan-3 (442 aa).

Disordered regions lie at residues methionine 1–alanine 25 and arginine 47–serine 80. Residues methionine 1–glycine 44 form the signal peptide. Topologically, residues alanine 45 to valine 387 are extracellular. A compositionally biased stretch (basic and acidic residues) spans tryptophan 48–aspartate 58. Acidic residues predominate over residues glycine 61–aspartate 75. 4 O-linked (Xyl...) (glycosaminoglycan) serine glycosylation sites follow: serine 78, serine 80, serine 82, and serine 89. O-linked (GalNAc) threonine; by GALNT13 glycosylation occurs at threonine 107. Disordered stretches follow at residues glutamate 152–alanine 199, alanine 253–proline 293, and glutamate 305–proline 327. Low complexity-rich tracts occupy residues alanine 157–alanine 199 and threonine 276–threonine 287. O-linked (GalNAc) serine; by GALNT13 glycosylation occurs at serine 161. O-linked (GalNAc) threonine; by GALNT13 glycosylation is found at threonine 162, threonine 163, threonine 170, and threonine 172. O-linked (Xyl...) (glycosaminoglycan) serine glycosylation is found at serine 315 and serine 367. Residues alanine 388–isoleucine 408 form a helical membrane-spanning segment. 4 positions are modified to phosphotyrosine: tyrosine 409, tyrosine 419, tyrosine 431, and tyrosine 441. The Cytoplasmic portion of the chain corresponds to tyrosine 409 to alanine 442. Residues tyrosine 419 to alanine 442 are disordered. Residues lysine 433–alanine 442 are compositionally biased toward basic and acidic residues.

The protein belongs to the syndecan proteoglycan family. Interacts with TIAM1. Interacts with PTN (via heparan sulfate chains); this interaction mediates the neurite outgrowth-promoting signal from PTN to the cytoskeleton of growing neurites; this interaction mediates osteoblast recruitment. Interacts with MDK; this interaction induces SDC3 clustering; this interaction induces neuronal cell adhesion and neurite outgrowth. O-glycosylated within the Thr/Ser-rich region which could interact with lectin domains on other molecules.

The protein resides in the cell membrane. In terms of biological role, cell surface proteoglycan that may bear heparan sulfate. May have a role in the organization of cell shape by affecting the actin cytoskeleton, possibly by transferring signals from the cell surface in a sugar-dependent mechanism. The sequence is that of Syndecan-3 (Sdc3) from Mus musculus (Mouse).